A 581-amino-acid polypeptide reads, in one-letter code: NADH-quinone oxidoreductase subunit C/D (581 aa).

The tract at residues 1-172 (MSGTDLVSEL…PLFNMTAALF (172 aa)) is NADH dehydrogenase I subunit C. The tract at residues 196 to 581 (ELMILNYGPH…IDYVMSDVDR (386 aa)) is NADH dehydrogenase I subunit D.

It in the N-terminal section; belongs to the complex I 30 kDa subunit family. The protein in the C-terminal section; belongs to the complex I 49 kDa subunit family. NDH-1 is composed of 13 different subunits. Subunits NuoB, CD, E, F, and G constitute the peripheral sector of the complex.

The protein localises to the cell inner membrane. The enzyme catalyses a quinone + NADH + 5 H(+)(in) = a quinol + NAD(+) + 4 H(+)(out). NDH-1 shuttles electrons from NADH, via FMN and iron-sulfur (Fe-S) centers, to quinones in the respiratory chain. The immediate electron acceptor for the enzyme in this species is believed to be ubiquinone. Couples the redox reaction to proton translocation (for every two electrons transferred, four hydrogen ions are translocated across the cytoplasmic membrane), and thus conserves the redox energy in a proton gradient. This Rhodopseudomonas palustris (strain BisB5) protein is NADH-quinone oxidoreductase subunit C/D.